A 483-amino-acid chain; its full sequence is MKGFHAFCVILLIFGSVSEAKFDDFEDEEDIVEYDDNDFAEFEDVAEDSVTESPQRVIITEDDEDETTVELEGQDESQEGDFEDADTQEGDTESEPYDDEEFEGYEDKPDTSSSKSKDPITIVDVPAHLQNSWESYYLEILMVTGLLAYIMNYIIGKNKNSRLAQAWFNTHRELLESNFTLVGDDGTNKEATSTGKLNQENEHIYNLWCSGRVCCEGMLIQLRFLKRQDLLNVLARMMRPVSDQVQIKVTMNDEDMDTYVFAVGARKALVRLQKEMQDLSEFCSDKPKSGAKYGLPDSLAILSEMGEVTDGMMDTKMLHFLTHYADKIESIHFSDQFSGPKIMQEEGQPLKLPDTKRTLLFTFNVPGSGNTYPKDMEALLPLMNMVIYSIDKAKKFRLNREGKQKADKNRARVEENFLKLTHVQRQEAAQSRREEKKRAEKERIMNEEDPEKQRRLEEAALRREQKKLEKKQMKMKQIKVKAM.

The N-terminal stretch at 1-20 (MKGFHAFCVILLIFGSVSEA) is a signal peptide. The Cytoplasmic portion of the chain corresponds to 21-135 (KFDDFEDEED…PAHLQNSWES (115 aa)). A disordered region spans residues 44–118 (DVAEDSVTES…PDTSSSKSKD (75 aa)). A compositionally biased stretch (acidic residues) spans 60–104 (TEDDEDETTVELEGQDESQEGDFEDADTQEGDTESEPYDDEEFEG). Over residues 105–118 (YEDKPDTSSSKSKD) the composition is skewed to basic and acidic residues. A helical membrane pass occupies residues 136-156 (YYLEILMVTGLLAYIMNYIIG). Over 157 to 483 (KNKNSRLAQA…KMKQIKVKAM (327 aa)) the chain is Lumenal. N-linked (GlcNAc...) asparagine glycosylation occurs at N178. The segment at 424-483 (QRQEAAQSRREEKKRAEKERIMNEEDPEKQRRLEEAALRREQKKLEKKQMKMKQIKVKAM) is disordered. Over residues 430-472 (QSRREEKKRAEKERIMNEEDPEKQRRLEEAALRREQKKLEKKQ) the composition is skewed to basic and acidic residues. Residues 450 to 483 (PEKQRRLEEAALRREQKKLEKKQMKMKQIKVKAM) are a coiled coil. Residues 473-483 (MKMKQIKVKAM) are compositionally biased toward basic residues.

The protein belongs to the CCDC47 family. Component of the PAT complex, composed of WDR83OS/Asterix and CCDC47. The PAT complex is part of the multi-pass translocon (MPT) complex, composed of three subcomplexes, the GEL complex (composed of RAB5IF/OPTI and TMCO1), the BOS complex (composed of NCLN/Nicalin, NOMO1 and TMEM147) and the PAT complex (composed of WDR83OS/Asterix and CCDC47). The MPT complex associates with the SEC61 complex. Interacts with VCP, HSPA5, DERL1, DERL2 and SELENOS.

It localises to the endoplasmic reticulum membrane. The protein localises to the rough endoplasmic reticulum membrane. Functionally, component of the multi-pass translocon (MPT) complex that mediates insertion of multi-pass membrane proteins into the lipid bilayer of membranes. The MPT complex takes over after the SEC61 complex: following membrane insertion of the first few transmembrane segments of proteins by the SEC61 complex, the MPT complex occludes the lateral gate of the SEC61 complex to promote insertion of subsequent transmembrane regions. Within the MPT complex, the PAT subcomplex sequesters any highly polar regions in the transmembrane domains away from the non-polar membrane environment until they can be buried in the interior of the fully assembled protein. Within the PAT subcomplex, CCDC47 occludes the lateral gate of the SEC61 complex. Involved in the regulation of calcium ion homeostasis in the ER. Required for proper protein degradation via the ERAD (ER-associated degradation) pathway. Has an essential role in the maintenance of ER organization during embryogenesis. This is PAT complex subunit CCDC47 (CCDC47) from Bos taurus (Bovine).